We begin with the raw amino-acid sequence, 289 residues long: O-methyltransferase asqN (289 aa).

Aspartate 155 contributes to the S-adenosyl-L-methionine binding site. Histidine 195 functions as the Proton acceptor in the catalytic mechanism.

Belongs to the class I-like SAM-binding methyltransferase superfamily. Cation-independent O-methyltransferase family.

It functions in the pathway secondary metabolite biosynthesis. It participates in alkaloid biosynthesis. Its pathway is mycotoxin biosynthesis. O-methyltransferase; part of the gene cluster that mediates the biosynthesis of the aspoquinolone mycotoxins. The role of asqN within the aspoquinolone pathway has still to be determined. The first step of the pathway is catalyzed by the nonribosomal peptide synthetase asqK that condenses anthranilic acid and O-methyl-L-tyrosine to produce 4'-methoxycyclopeptin. 4'-methoxycyclopeptin is then converted to 4'-methoxydehydrocyclopeptin by the ketoglutarate-dependent dioxygenase asqJ. AsqJ also converts its first product 4'-methoxydehydrocyclopeptin to 4'-methoxycyclopenin. The following conversion of 4'-methoxycyclopenin into 4'-methoxyviridicatin is catalyzed by the cyclopenase asqI. 4'-methoxyviridicatin is the precursor of quinolone natural products, and is further converted to quinolinone B. The prenyltransferase asqH1 then catalyzes the canonical Friedel-Crafts alkylation of quinolinone B with dimethylallyl cation to yield dimethylallyl quinolone, which is subjected to FAD-dependent dehydrogenation by the FAD-linked oxidoreductase asqF to yield conjugated aryl diene. The delta(3') double bond then serves as the site of the second alkylation with DMAPP catalyzed by the prenyltransferase asqH2 to yield a carbenium ion intermediate, which can be attacked by H(2)O to yield a styrenyl quinolone containing a C3'-hydroxyprenyl chain. The FAD-dependent monooxygenase asqG performs epoxidation of the terminal C7'-C8' olefin. Finally, after dehydratation of the epoxide at C3 by asqC, the quinolone epoxide rearrangement protein asqO catalyzes an enzymatic 3-exo-tet cyclization to yield the cyclopropyl-THF ring system in aspoquinolone. The protein is O-methyltransferase asqN of Emericella nidulans (strain FGSC A4 / ATCC 38163 / CBS 112.46 / NRRL 194 / M139) (Aspergillus nidulans).